A 430-amino-acid chain; its full sequence is Rho GTPase-activating protein 2 (430 aa).

The disordered stretch occupies residues 1–36 (MTGLVMMTKGGGCGGGGKGGRRKSTAEEEEEEEQNQ). Residues 9–18 (KGGGCGGGGK) are compositionally biased toward gly residues. The region spanning 80–93 (IGWPTNVRHITHVT) is the CRIB domain. Residues 125–310 (VSAESMQCSY…TLAEREENAT (186 aa)) enclose the Rho-GAP domain. Residues 307-372 (ENATGSEGYS…HLSRHSTHED (66 aa)) form a disordered region. Low complexity predominate over residues 316 to 326 (SPSHSSNSQTD). Residues 347 to 356 (ECGEEEEVEE) are compositionally biased toward acidic residues. The segment covering 357–371 (VEQHQEHLSRHSTHE) has biased composition (basic and acidic residues).

Homodimerizes via its Rho-GAP domain and forms a tetrameric complex (2:2) with ARAC1/ROP3, ARAC2/ROP7, ARAC4/ROP2, ARAC5/ROP4, ARAC7/ROP9 or ARAC11/ROP1.

Acts as a GTPase activator for the Rac-type GTPase by converting it to an inactive GDP-bound state. The polypeptide is Rho GTPase-activating protein 2 (ROPGAP2) (Arabidopsis thaliana (Mouse-ear cress)).